Consider the following 250-residue polypeptide: uncharacterized protein (250 aa).

The stretch at 165-208 (HLNLETANTKATEYQKNYQEELKQRQELRQKLLQERTQKMLEAL) forms a coiled coil. Basic and acidic residues predominate over residues 201–233 (TQKMLEALHQEETPEQDARDTAKKKTDQEEHTM). Positions 201–250 (TQKMLEALHQEETPEQDARDTAKKKTDQEEHTMRKANAPKTKASGEAPTP) are disordered.

This is an uncharacterized protein from Treponema pallidum (strain Nichols).